The following is a 356-amino-acid chain: S-adenosylmethionine:tRNA ribosyltransferase-isomerase (356 aa).

It belongs to the QueA family. As to quaternary structure, monomer.

It is found in the cytoplasm. The enzyme catalyses 7-aminomethyl-7-carbaguanosine(34) in tRNA + S-adenosyl-L-methionine = epoxyqueuosine(34) in tRNA + adenine + L-methionine + 2 H(+). It functions in the pathway tRNA modification; tRNA-queuosine biosynthesis. Its function is as follows. Transfers and isomerizes the ribose moiety from AdoMet to the 7-aminomethyl group of 7-deazaguanine (preQ1-tRNA) to give epoxyqueuosine (oQ-tRNA). The protein is S-adenosylmethionine:tRNA ribosyltransferase-isomerase of Escherichia coli O8 (strain IAI1).